Here is a 330-residue protein sequence, read N- to C-terminus: Phosphate acyltransferase (330 aa).

It belongs to the PlsX family. In terms of assembly, homodimer. Probably interacts with PlsY.

Its subcellular location is the cytoplasm. The catalysed reaction is a fatty acyl-[ACP] + phosphate = an acyl phosphate + holo-[ACP]. It functions in the pathway lipid metabolism; phospholipid metabolism. Its function is as follows. Catalyzes the reversible formation of acyl-phosphate (acyl-PO(4)) from acyl-[acyl-carrier-protein] (acyl-ACP). This enzyme utilizes acyl-ACP as fatty acyl donor, but not acyl-CoA. In Streptococcus pneumoniae serotype 2 (strain D39 / NCTC 7466), this protein is Phosphate acyltransferase.